The sequence spans 879 residues: Phosphoenolpyruvate carboxylase (879 aa).

Catalysis depends on residues His138 and Lys545.

It belongs to the PEPCase type 1 family. It depends on Mg(2+) as a cofactor.

It carries out the reaction oxaloacetate + phosphate = phosphoenolpyruvate + hydrogencarbonate. Forms oxaloacetate, a four-carbon dicarboxylic acid source for the tricarboxylic acid cycle. This Haemophilus influenzae (strain ATCC 51907 / DSM 11121 / KW20 / Rd) protein is Phosphoenolpyruvate carboxylase (ppc).